The chain runs to 317 residues: 2,3-dihydroxyphenylpropionate/2,3-dihydroxicinnamic acid 1,2-dioxygenase 2 (317 aa).

H115 functions as the Proton donor in the catalytic mechanism. The active-site Proton acceptor is H179.

It belongs to the LigB/MhpB extradiol dioxygenase family. Homotetramer. The cofactor is Fe(2+).

The catalysed reaction is 3-(2,3-dihydroxyphenyl)propanoate + O2 = (2Z,4E)-2-hydroxy-6-oxonona-2,4-dienedioate + H(+). It carries out the reaction (2E)-3-(2,3-dihydroxyphenyl)prop-2-enoate + O2 = (2Z,4E,7E)-2-hydroxy-6-oxonona-2,4,7-trienedioate + H(+). The protein operates within aromatic compound metabolism; 3-phenylpropanoate degradation. Catalyzes the non-heme iron(II)-dependent oxidative cleavage of 2,3-dihydroxyphenylpropionic acid and 2,3-dihydroxicinnamic acid into 2-hydroxy-6-ketononadienedioate and 2-hydroxy-6-ketononatrienedioate, respectively. The protein is 2,3-dihydroxyphenylpropionate/2,3-dihydroxicinnamic acid 1,2-dioxygenase 2 of Dechloromonas aromatica (strain RCB).